Here is a 283-residue protein sequence, read N- to C-terminus: 2-dehydro-3-deoxyphosphooctonate aldolase (283 aa).

Belongs to the KdsA family.

The protein localises to the cytoplasm. It carries out the reaction D-arabinose 5-phosphate + phosphoenolpyruvate + H2O = 3-deoxy-alpha-D-manno-2-octulosonate-8-phosphate + phosphate. It participates in carbohydrate biosynthesis; 3-deoxy-D-manno-octulosonate biosynthesis; 3-deoxy-D-manno-octulosonate from D-ribulose 5-phosphate: step 2/3. The protein operates within bacterial outer membrane biogenesis; lipopolysaccharide biosynthesis. The protein is 2-dehydro-3-deoxyphosphooctonate aldolase of Vibrio campbellii (strain ATCC BAA-1116).